The primary structure comprises 177 residues: Transcription antitermination protein NusB (177 aa).

The segment at 1–36 (MTEQPTKPTGSRPPRQPRTGLTSTGARKAGSKSDRS) is disordered.

This sequence belongs to the NusB family.

Functionally, involved in transcription antitermination. Required for transcription of ribosomal RNA (rRNA) genes. Binds specifically to the boxA antiterminator sequence of the ribosomal RNA (rrn) operons. In Albidiferax ferrireducens (strain ATCC BAA-621 / DSM 15236 / T118) (Rhodoferax ferrireducens), this protein is Transcription antitermination protein NusB.